The primary structure comprises 189 residues: Probable nicotinate-nucleotide adenylyltransferase (189 aa).

The protein belongs to the NadD family.

It carries out the reaction nicotinate beta-D-ribonucleotide + ATP + H(+) = deamido-NAD(+) + diphosphate. It functions in the pathway cofactor biosynthesis; NAD(+) biosynthesis; deamido-NAD(+) from nicotinate D-ribonucleotide: step 1/1. In terms of biological role, catalyzes the reversible adenylation of nicotinate mononucleotide (NaMN) to nicotinic acid adenine dinucleotide (NaAD). The protein is Probable nicotinate-nucleotide adenylyltransferase of Bacillus licheniformis (strain ATCC 14580 / DSM 13 / JCM 2505 / CCUG 7422 / NBRC 12200 / NCIMB 9375 / NCTC 10341 / NRRL NRS-1264 / Gibson 46).